We begin with the raw amino-acid sequence, 270 residues long: Putative ABC transporter ATP-binding protein MG304 homolog (270 aa).

Residues 2–232 form the ABC transporter domain; the sequence is LNVTNLSFTY…LHLFHQHHFT (231 aa). Position 36–43 (36–43) interacts with ATP; it reads GHNGSGKS.

The protein belongs to the ABC transporter superfamily.

This Mycoplasma pneumoniae (strain ATCC 29342 / M129 / Subtype 1) (Mycoplasmoides pneumoniae) protein is Putative ABC transporter ATP-binding protein MG304 homolog.